We begin with the raw amino-acid sequence, 109 residues long: Oncomodulin (109 aa).

At Ser2 the chain carries N-acetylserine. EF-hand domains lie at 39 to 74 and 78 to 109; these read MSASQVKDVFRFIDNDQSGYLDEEELKFFLQKFESG and LTESETKSLMAAADNDGDGKIGADEFQEMVHS. Ca(2+)-binding residues include Asp52, Asp54, Ser56, Tyr58, Glu63, Asp91, Asp93, Asp95, Lys97, and Glu102.

It belongs to the parvalbumin family. Abundant in the organ of Corti.

Functionally, has some calmodulin-like activity with respect to enzyme activation and growth regulation. Binds two calcium ions. The protein is Oncomodulin (OCM) of Cavia porcellus (Guinea pig).